Consider the following 492-residue polypeptide: 3-octaprenyl-4-hydroxybenzoate carboxy-lyase (492 aa).

Asparagine 177 is a Mn(2+) binding site. Residues 180 to 182 (IYR), 194 to 196 (RWL), and 199 to 200 (RG) each bind prenylated FMN. Glutamate 243 provides a ligand contact to Mn(2+). Aspartate 292 serves as the catalytic Proton donor.

This sequence belongs to the UbiD family. Homohexamer. The cofactor is prenylated FMN. Mn(2+) serves as cofactor.

The protein localises to the cell membrane. It carries out the reaction a 4-hydroxy-3-(all-trans-polyprenyl)benzoate + H(+) = a 2-(all-trans-polyprenyl)phenol + CO2. Its pathway is cofactor biosynthesis; ubiquinone biosynthesis. In terms of biological role, catalyzes the decarboxylation of 3-octaprenyl-4-hydroxy benzoate to 2-octaprenylphenol, an intermediate step in ubiquinone biosynthesis. The sequence is that of 3-octaprenyl-4-hydroxybenzoate carboxy-lyase from Neisseria gonorrhoeae (strain ATCC 700825 / FA 1090).